The primary structure comprises 410 residues: Chitin deacetylase 3 (410 aa).

Positions 1-18 (MYGHLSLSTLSLLAVVAA) are cleaved as a signal peptide. A propeptide spanning residues 19–39 (APFPESWLQPRDSDVSQLFRR) is cleaved from the precursor. 2 N-linked (GlcNAc...) asparagine glycosylation sites follow: N61 and N80. One can recognise a NodB homology domain in the interval 124–314 (KVWALSFDDG…KAVANGWSVK (191 aa)). The active-site Proton acceptor is the D131. Residue D131 participates in acetate binding. D132 is a Co(2+) binding site. A glycan (N-linked (GlcNAc...) asparagine) is linked at N149. Co(2+) is bound by residues H183 and H187. Y225 contributes to the acetate binding site. N-linked (GlcNAc...) asparagine glycosylation is present at N279. H289 functions as the Proton donor in the catalytic mechanism. N293 carries N-linked (GlcNAc...) asparagine glycosylation. S385 is lipidated: GPI-anchor amidated serine. A propeptide spans 386-410 (SSWPIANRPSLFVIACGLALAAIMV) (removed in mature form).

It belongs to the polysaccharide deacetylase family. It depends on Co(2+) as a cofactor.

It is found in the cell membrane. The catalysed reaction is [(1-&gt;4)-N-acetyl-beta-D-glucosaminyl](n) + n H2O = chitosan + n acetate. Functionally, hydrolyzes the N-acetamido groups of N-acetyl-D-glucosamine residues in chitin to form chitosan and acetate. Chitosan is required to anchor melanin to the cell wall, for maintenance of cell wall integrity, and for proper cytokinesis. Chitosan offers an advantage during infection as it is less readily detected than chitin by host immunosurveillance mechanisms. This Cryptococcus neoformans var. neoformans serotype D (strain JEC21 / ATCC MYA-565) (Filobasidiella neoformans) protein is Chitin deacetylase 3.